Here is a 152-residue protein sequence, read N- to C-terminus: Nucleoside diphosphate kinase (152 aa).

Lys-11, Phe-59, Arg-87, Thr-93, Arg-104, and Asn-114 together coordinate ATP. His-117 (pros-phosphohistidine intermediate) is an active-site residue.

Belongs to the NDK family. In terms of assembly, homotetramer. It depends on Mg(2+) as a cofactor.

It localises to the cytoplasm. It carries out the reaction dZDP + ATP = dZTP + ADP. The enzyme catalyses a 2'-deoxyribonucleoside 5'-diphosphate + ATP = a 2'-deoxyribonucleoside 5'-triphosphate + ADP. The catalysed reaction is a ribonucleoside 5'-diphosphate + ATP = a ribonucleoside 5'-triphosphate + ADP. Its pathway is purine metabolism. Major role in the synthesis of nucleoside triphosphates other than ATP. The ATP gamma phosphate is transferred to the NDP beta phosphate via a ping-pong mechanism, using a phosphorylated active-site intermediate. In terms of biological role, (Microbial infection) Catalyzes the phosphorylation of dZDP to dZTP, when the bacterium is infected by a phage that produces the substrate for the synthesis of dZTP (2- amino-2'-deoxyadenosine 5'-triphosphate), which is then used by the phage as a DNA polymerase substrate. This chain is Nucleoside diphosphate kinase, found in Synechococcus sp. (strain CC9311).